Reading from the N-terminus, the 310-residue chain is Succinate dehydrogenase assembly factor 2, mitochondrial (310 aa).

Residues 35-48 show a composition bias toward basic and acidic residues; the sequence is LKDGSDEASPEVKA. The interval 35 to 67 is disordered; it reads LKDGSDEASPEVKAHRANQANKAPNQFVPNTTS. A compositionally biased stretch (polar residues) spans 52–67; sequence NQANKAPNQFVPNTTS.

This sequence belongs to the SDHAF2 family. As to quaternary structure, interacts with the flavoprotein subunit within the SDH catalytic dimer.

Its subcellular location is the mitochondrion matrix. Plays an essential role in the assembly of succinate dehydrogenase (SDH), an enzyme complex (also referred to as respiratory complex II) that is a component of both the tricarboxylic acid (TCA) cycle and the mitochondrial electron transport chain, and which couples the oxidation of succinate to fumarate with the reduction of ubiquinone (coenzyme Q) to ubiquinol. Required for flavinylation (covalent attachment of FAD) of the flavoprotein subunit of the SDH catalytic dimer. In Penicillium rubens (strain ATCC 28089 / DSM 1075 / NRRL 1951 / Wisconsin 54-1255) (Penicillium chrysogenum), this protein is Succinate dehydrogenase assembly factor 2, mitochondrial.